The sequence spans 122 residues: Large ribosomal subunit protein uL14 (122 aa).

The protein belongs to the universal ribosomal protein uL14 family. In terms of assembly, part of the 50S ribosomal subunit. Forms a cluster with proteins L3 and L19. In the 70S ribosome, L14 and L19 interact and together make contacts with the 16S rRNA in bridges B5 and B8.

Binds to 23S rRNA. Forms part of two intersubunit bridges in the 70S ribosome. The protein is Large ribosomal subunit protein uL14 of Cupriavidus taiwanensis (strain DSM 17343 / BCRC 17206 / CCUG 44338 / CIP 107171 / LMG 19424 / R1) (Ralstonia taiwanensis (strain LMG 19424)).